Reading from the N-terminus, the 224-residue chain is TM2 domain-containing protein amaretto (224 aa).

The signal sequence occupies residues 1–18 (MRIFYGLLAFLVARQHDA). The Extracellular portion of the chain corresponds to 19 to 154 (QAIQARSDKE…FLRAGVPCVR (136 aa)). N-linked (GlcNAc...) asparagine glycans are attached at residues N102 and N142. The helical transmembrane segment at 155–175 (YTDHYFVTTLIYSMLLGFLGM) threads the bilayer. Positions 157-205 (DHYFVTTLIYSMLLGFLGMDRFCLGQTGTAVGKLLTMGGVGVWWIIDVI) constitute a TM2 domain. Over 176–189 (DRFCLGQTGTAVGK) the chain is Cytoplasmic. A helical membrane pass occupies residues 190–210 (LLTMGGVGVWWIIDVILLITN). The Extracellular segment spans residues 211-224 (NLLPEDGSNWNPYV).

It belongs to the TM2 family.

The protein resides in the membrane. Positive regulator of Notch signaling. Maternal neurogenic factor involved in Notch signaling-dependent neuroectodermal specification during early embryogenesis. Functions cooperatively with amx/TM2D3 and bisc/TM2D1. The sequence is that of TM2 domain-containing protein amaretto from Drosophila melanogaster (Fruit fly).